A 148-amino-acid polypeptide reads, in one-letter code: Coactosin (148 aa).

The 134-residue stretch at 1–134 (MSGFDLSEVA…VEDEIAAKIK (134 aa)) folds into the ADF-H domain. Positions 71–76 (DEESKR) match the F-loop; important for stable binding to G-actin and F-actin motif. A Phosphoserine modification is found at serine 147.

Belongs to the actin-binding proteins ADF family. Coactosin subfamily. As to quaternary structure, interacts with 14-3-3 protein 3. In terms of processing, phosphorylation at Ser-147 appears not to affect its binding to actin; however, it may regulate phagocytosis and motility.

It is found in the cytoplasm. Its subcellular location is the cell projection. It localises to the phagocytic cup. The protein resides in the pseudopodium. The protein localises to the cell membrane. It is found in the cytoskeleton. Functionally, actin-binding protein which is involved in F-actin stabilization. May play a role during phagocytosis and pseudopod formation by contributing to the maintenance of F-actin. This Entamoeba histolytica (strain ATCC 30459 / HM-1:IMSS / ABRM) protein is Coactosin.